A 338-amino-acid chain; its full sequence is Trace amine-associated receptor 1 (338 aa).

Residues 1–24 lie on the Extracellular side of the membrane; sequence MPFCHNIINISCVKNNWSNDVRAS. 3 cysteine pairs are disulfide-bonded: Cys-4–Cys-177, Cys-12–Cys-87, and Cys-95–Cys-181. Asn-9 and Asn-16 each carry an N-linked (GlcNAc...) asparagine glycan. The chain crosses the membrane as a helical span at residues 25–45; that stretch reads LYSLMALIILTTLVGNLIVIV. The Cytoplasmic segment spans residues 46-58; sequence SISHFKQLHTPTN. The chain crosses the membrane as a helical span at residues 59–79; it reads WLIHSMATVDFLLGCLVMPYS. At 80-97 the chain is on the extracellular side; it reads MVRSAEHCWYFGEVFCKI. The helical transmembrane segment at 98 to 118 threads the bilayer; it reads HTSTDIMLSSASIFHLSFISI. Asp-102 is a binding site for 2-phenylethylamine. Topologically, residues 119-135 are cytoplasmic; the sequence is DRYYAVCDPLRYKAKIN. A helical transmembrane segment spans residues 136-156; that stretch reads ILVVCVMIFISWSVPAVFAFG. Residues 157-187 are Extracellular-facing; that stretch reads MIFLELNFKGAEEIYYKHVHCRGGCSVFFSK. Residues 188–208 form a helical membrane-spanning segment; the sequence is ISGVLAFMTSFYIPGSIMLCI. Topologically, residues 209–251 are cytoplasmic; it reads YYRIYLIAKEQARSINDANQKLQIGLEMKNGISQSKERKAVKT. A helical membrane pass occupies residues 252–272; it reads LGIVMGVFLICWCPFFVCTVI. Residues 273–286 are Extracellular-facing; the sequence is DPFLHYTIPPTLND. A helical transmembrane segment spans residues 287–307; it reads VLIWFGYLNSTFNPMVYAFFY. Residues 308 to 338 lie on the Cytoplasmic side of the membrane; the sequence is PWFRKALKMILFGKIFQKDSSRCKLFLESSS.

The protein belongs to the G-protein coupled receptor 1 family.

It localises to the endomembrane system. Its subcellular location is the endoplasmic reticulum membrane. It is found in the cell membrane. Intracellular G-protein coupled receptor for trace amines, which recognizes endogenous amine-containing metabolites such as beta-phenylethylamine (beta-PEA), 3-iodothyronamine (T1AM), isoamylamine (IAA), cadaverine (CAD), cyclohexylamine (CHA), p-tyramine (p-TYR), trimethylamine (TMA), octopamine and tryptamine. Also functions as a receptor for various drugs and psychoactive substances, such as amphetamine and methamphetamine. Unresponsive to classical biogenic amines, such as epinephrine and histamine and only partially activated by dopamine and serotonin. Expressed in both the central and peripheral nervous system: TAAR1 activation regulates the activity of several neurotransmitter signaling pathways by (1) decreasing the basal firing rates of the neurons involved and by (2) lowering the sensitivity of receptors to neurotransmitters. Ligand binding causes a conformation change that triggers signaling via guanine nucleotide-binding proteins (G proteins) and modulates the activity of downstream effectors. TAAR1 is coupled with different G(i)/G(o)-, G(s)- or G(q)/G(11) classes of G alpha proteins depending on the ligand. CAD-binding is coupled to G(i)/G(o) G alpha proteins and mediates inhibition of adenylate cyclase activity. T1AM- or beta-PEA-binding is coupled to G(s) G alpha proteins and mediates activation of adenylate cyclase activity. CHA- or IAA-binding is coupled to G(q)/G(11) G alpha proteins and activates phospholipase C-beta, releasing diacylglycerol (DAG) and inositol 1,4,5-trisphosphate (IP3) second messengers. TMA-binding is coupled with all three G(i)/G(o)-, G(s)- or G(q)/G(11) G alpha protein subtypes. This chain is Trace amine-associated receptor 1 (TAAR1), found in Macaca mulatta (Rhesus macaque).